Here is a 474-residue protein sequence, read N- to C-terminus: MAGISIGVGSTDYTDLVNKMVNLEGAAKTNQLATLEKTTTTRLTALGQFKSAISAFQTALTALNSNAVFMARTAKSSNEDILKASATQSAVAGTYQIQVNSLATSSKIALQAIADPANAKFNSGTLNISVGDTKLPAITVDSSNNTLAGMRDAINQAGKEAGVSATIITDNSGSRLVLSSTKTGDGKDIKVEVSDDGSGGNTSLSQLAFDPATAPKLSDGAAAGYVTKAANGEITVDGLKRSIASNSVSDVIDGVSFDVKAVTEAGKPITLTVSRDDAGVKDNVKKFVEAYNTLTKFINEQTVVTKVGEDKNPVTGALLGDASVRALVNTMRSELIASNENGSVRNLAALGITTTKDGTLEIDEKKLDKAISADFEGVASYFTGDTGLAKRLGDKMKPYTDAQGILDQRTTTLQKTLSNVDTQKADLAKRLAALQEKLTTQFNLLSAMQDEMTKRQKSITDNLASLPYGSGKKT.

Residues 408-454 (QRTTTLQKTLSNVDTQKADLAKRLAALQEKLTTQFNLLSAMQDEMTK) are a coiled coil.

This sequence belongs to the FliD family. As to quaternary structure, homopentamer.

It is found in the secreted. Its subcellular location is the bacterial flagellum. In terms of biological role, required for the morphogenesis and for the elongation of the flagellar filament by facilitating polymerization of the flagellin monomers at the tip of growing filament. Forms a capping structure, which prevents flagellin subunits (transported through the central channel of the flagellum) from leaking out without polymerization at the distal end. Essential for motility. Responsible for adhesion to mucin, which is the initial event in colonization by this organism of the airways of cystic fibrosis patients. This Pseudomonas aeruginosa (strain ATCC 15692 / DSM 22644 / CIP 104116 / JCM 14847 / LMG 12228 / 1C / PRS 101 / PAO1) protein is B-type flagellar hook-associated protein 2 (fliD).